The following is a 339-amino-acid chain: D-erythrose-4-phosphate dehydrogenase (339 aa).

Position 11-12 (11-12 (RI)) interacts with NAD(+). Substrate is bound by residues 158–160 (SCT), Arg204, 217–218 (TK), and Arg240. Cys159 acts as the Nucleophile in catalysis. Asn322 is an NAD(+) binding site.

It belongs to the glyceraldehyde-3-phosphate dehydrogenase family. Epd subfamily. Homotetramer.

Its subcellular location is the cytoplasm. It catalyses the reaction D-erythrose 4-phosphate + NAD(+) + H2O = 4-phospho-D-erythronate + NADH + 2 H(+). Its pathway is cofactor biosynthesis; pyridoxine 5'-phosphate biosynthesis; pyridoxine 5'-phosphate from D-erythrose 4-phosphate: step 1/5. In terms of biological role, catalyzes the NAD-dependent conversion of D-erythrose 4-phosphate to 4-phosphoerythronate. The chain is D-erythrose-4-phosphate dehydrogenase from Aliivibrio fischeri (strain ATCC 700601 / ES114) (Vibrio fischeri).